Here is a 129-residue protein sequence, read N- to C-terminus: Small ribosomal subunit protein uS11 (129 aa).

This sequence belongs to the universal ribosomal protein uS11 family. In terms of assembly, part of the 30S ribosomal subunit. Interacts with proteins S7 and S18. Binds to IF-3.

In terms of biological role, located on the platform of the 30S subunit, it bridges several disparate RNA helices of the 16S rRNA. Forms part of the Shine-Dalgarno cleft in the 70S ribosome. The sequence is that of Small ribosomal subunit protein uS11 from Dinoroseobacter shibae (strain DSM 16493 / NCIMB 14021 / DFL 12).